The chain runs to 481 residues: MTPALTALLCLGLSLGPRTHVQAGPLPKPTLWAEPGSVISWRSPVTIWCQGSLEAQEYRLYKEGSREPRDTQNPMEPKNKARFSIPSMTEHHAGRYRCYYRSPAGWSEPSDPLELVVTGFYSTPTLSALPSPVVASGGNVTLRCGSQKGYDHFVLMKEGEHQLPQTLDSQHLHSGGFQALFPVGPVTPSHRWTFTCYGSYRNTPQVWSHPSDPLEILPSGVSRKPSLLTLQGPVLAPGESLTLQCGSDVGYDRFTLYKEGERDFLQLPGPQPQAGLSQANFTLGPVSRSHGGQYRCYGAHNLSSEWSAPSDPLNILIAGQFYDRVSLSLQPDPTVASGENVTLLCQSQGQFDTFLLTKEGAAHPPLRLRSKYQSQKYQAEFPMNPVTSAHAGTYRCYGSYSSNPHLLSFPSDPLKLMVSGPSGGPSLPPTGPPSTPASHAKDYTVENLIRMGMAGLVLVVLGILLFEAQHSQRSPQDAARR.

Positions 1-23 (MTPALTALLCLGLSLGPRTHVQA) are cleaved as a signal peptide. Residues 24–118 (GPLPKPTLWA…PSDPLELVVT (95 aa)) form the Ig-like C2-type 1 domain. The Extracellular segment spans residues 24–447 (GPLPKPTLWA…SHAKDYTVEN (424 aa)). A disulfide bridge connects residues cysteine 49 and cysteine 98. N-linked (GlcNAc...) asparagine glycosylation occurs at asparagine 139. Cystine bridges form between cysteine 144-cysteine 196 and cysteine 245-cysteine 296. 2 Ig-like C2-type domains span residues 225–314 (PSLL…DPLN) and 323–408 (DRVS…HLLS). Asparagine 301 and asparagine 340 each carry an N-linked (GlcNAc...) asparagine glycan. Cysteine 345 and cysteine 396 form a disulfide bridge. Positions 418–439 (VSGPSGGPSLPPTGPPSTPASH) are disordered. The segment covering 426–435 (SLPPTGPPST) has biased composition (pro residues). Residues 448-468 (LIRMGMAGLVLVVLGILLFEA) form a helical membrane-spanning segment. Topologically, residues 469 to 481 (QHSQRSPQDAARR) are cytoplasmic.

Its subcellular location is the membrane. May act as receptor for class I MHC antigens. The polypeptide is Leukocyte immunoglobulin-like receptor subfamily A member 6 (LILRA6) (Pan troglodytes (Chimpanzee)).